The following is a 545-amino-acid chain: CTP synthase (545 aa).

The segment at 1–265 (MNGIKHIFIT…DKFVIKHLDL (265 aa)) is amidoligase domain. S15 provides a ligand contact to CTP. S15 serves as a coordination point for UTP. ATP is bound by residues 16–21 (SIGKGL) and D73. 2 residues coordinate Mg(2+): D73 and E141. Residues 148–150 (DIE), 188–193 (KTKPTQ), and K224 contribute to the CTP site. UTP contacts are provided by residues 188-193 (KTKPTQ) and K224. Residues 290–534 (EIAIIGKYTG…VAAALARKEI (245 aa)) form the Glutamine amidotransferase type-1 domain. G349 contacts L-glutamine. C376 serves as the catalytic Nucleophile; for glutamine hydrolysis. Residues 377–380 (LGMQ), E400, and R460 contribute to the L-glutamine site. Catalysis depends on residues H507 and E509.

The protein belongs to the CTP synthase family. In terms of assembly, homotetramer.

The enzyme catalyses UTP + L-glutamine + ATP + H2O = CTP + L-glutamate + ADP + phosphate + 2 H(+). It catalyses the reaction L-glutamine + H2O = L-glutamate + NH4(+). It carries out the reaction UTP + NH4(+) + ATP = CTP + ADP + phosphate + 2 H(+). It participates in pyrimidine metabolism; CTP biosynthesis via de novo pathway; CTP from UDP: step 2/2. With respect to regulation, allosterically activated by GTP, when glutamine is the substrate; GTP has no effect on the reaction when ammonia is the substrate. The allosteric effector GTP functions by stabilizing the protein conformation that binds the tetrahedral intermediate(s) formed during glutamine hydrolysis. Inhibited by the product CTP, via allosteric rather than competitive inhibition. In terms of biological role, catalyzes the ATP-dependent amination of UTP to CTP with either L-glutamine or ammonia as the source of nitrogen. Regulates intracellular CTP levels through interactions with the four ribonucleotide triphosphates. This is CTP synthase from Tropheryma whipplei (strain Twist) (Whipple's bacillus).